A 429-amino-acid polypeptide reads, in one-letter code: Lysophosphatidic acid phosphatase type 6 (429 aa).

A mitochondrion-targeting transit peptide spans 1–32 (MISRVFKLRMWAPVGVLTSLTYCLHQRRVALA). Residues 58–169 (RHGARSPLKP…VFIRSTNIYR (112 aa)) form a substrate binding region. The active-site Nucleophile is the H59. D336 functions as the Proton donor in the catalytic mechanism.

It belongs to the histidine acid phosphatase family. Monomer. Detected in brain (at protein level).

The protein localises to the mitochondrion. The enzyme catalyses a phosphate monoester + H2O = an alcohol + phosphate. It catalyses the reaction 1-(9Z-octadecenoyl)-sn-glycero-3-phosphate + H2O = 1-(9Z-octadecenoyl)-sn-glycerol + phosphate. In terms of biological role, hydrolyzes lysophosphatidic acid (LPA) containing a medium length fatty acid chain to the corresponding monoacylglycerol. Has highest activity with lysophosphatidic acid containing myristate (C14:0), monounsaturated oleate (C18:1) or palmitate (C16:0), and lower activity with C18:0 and C6:0 lysophosphatidic acid. The polypeptide is Lysophosphatidic acid phosphatase type 6 (ACP6) (Bos taurus (Bovine)).